The sequence spans 482 residues: tRNA sulfurtransferase (482 aa).

One can recognise a THUMP domain in the interval 61–165 (EQAIEALACI…GEELFIVSAI (105 aa)). ATP is bound by residues 183-184 (LI), lysine 265, glycine 287, and glutamine 296. A disulfide bond links cysteine 344 and cysteine 456. One can recognise a Rhodanese domain in the interval 404-482 (SGDNEVILDI…GFANVKVYRP (79 aa)). Cysteine 456 acts as the Cysteine persulfide intermediate in catalysis.

This sequence belongs to the ThiI family.

The protein resides in the cytoplasm. It catalyses the reaction [ThiI sulfur-carrier protein]-S-sulfanyl-L-cysteine + a uridine in tRNA + 2 reduced [2Fe-2S]-[ferredoxin] + ATP + H(+) = [ThiI sulfur-carrier protein]-L-cysteine + a 4-thiouridine in tRNA + 2 oxidized [2Fe-2S]-[ferredoxin] + AMP + diphosphate. The catalysed reaction is [ThiS sulfur-carrier protein]-C-terminal Gly-Gly-AMP + S-sulfanyl-L-cysteinyl-[cysteine desulfurase] + AH2 = [ThiS sulfur-carrier protein]-C-terminal-Gly-aminoethanethioate + L-cysteinyl-[cysteine desulfurase] + A + AMP + 2 H(+). The protein operates within cofactor biosynthesis; thiamine diphosphate biosynthesis. Its function is as follows. Catalyzes the ATP-dependent transfer of a sulfur to tRNA to produce 4-thiouridine in position 8 of tRNAs, which functions as a near-UV photosensor. Also catalyzes the transfer of sulfur to the sulfur carrier protein ThiS, forming ThiS-thiocarboxylate. This is a step in the synthesis of thiazole, in the thiamine biosynthesis pathway. The sulfur is donated as persulfide by IscS. This chain is tRNA sulfurtransferase, found in Aeromonas hydrophila subsp. hydrophila (strain ATCC 7966 / DSM 30187 / BCRC 13018 / CCUG 14551 / JCM 1027 / KCTC 2358 / NCIMB 9240 / NCTC 8049).